We begin with the raw amino-acid sequence, 191 residues long: Protein Ves (191 aa).

Belongs to the Ves family.

This Escherichia coli O139:H28 (strain E24377A / ETEC) protein is Protein Ves.